The primary structure comprises 427 residues: Adenylosuccinate synthetase (427 aa).

GTP-binding positions include 12-18 (GDEGKGK) and 40-42 (GHT). The active-site Proton acceptor is aspartate 13. 2 residues coordinate Mg(2+): aspartate 13 and glycine 40. Residues 13 to 16 (DEGK), 38 to 41 (NAGH), threonine 128, arginine 142, glutamine 223, threonine 238, and arginine 302 each bind IMP. Histidine 41 functions as the Proton donor in the catalytic mechanism. Position 298–304 (298–304 (TTTGRPR)) interacts with substrate. GTP is bound by residues arginine 304, 330–332 (SID), and 412–414 (SVG).

Belongs to the adenylosuccinate synthetase family. As to quaternary structure, homodimer. Mg(2+) is required as a cofactor.

The protein resides in the cytoplasm. The catalysed reaction is IMP + L-aspartate + GTP = N(6)-(1,2-dicarboxyethyl)-AMP + GDP + phosphate + 2 H(+). It participates in purine metabolism; AMP biosynthesis via de novo pathway; AMP from IMP: step 1/2. Functionally, plays an important role in the de novo pathway of purine nucleotide biosynthesis. Catalyzes the first committed step in the biosynthesis of AMP from IMP. The sequence is that of Adenylosuccinate synthetase from Staphylococcus epidermidis (strain ATCC 12228 / FDA PCI 1200).